Here is a 474-residue protein sequence, read N- to C-terminus: tRNA-2-methylthio-N(6)-dimethylallyladenosine synthase (474 aa).

An MTTase N-terminal domain is found at 3-120 (KKLHIKTWGC…LPEMINSVRG (118 aa)). Residues Cys12, Cys49, Cys83, Cys157, Cys161, and Cys164 each contribute to the [4Fe-4S] cluster site. In terms of domain architecture, Radical SAM core spans 143–375 (RADGPTAFVS…QDRINQQTTA (233 aa)). A TRAM domain is found at 378–441 (RRKLGTVQRI…ANSLRGMLLR (64 aa)).

The protein belongs to the methylthiotransferase family. MiaB subfamily. Monomer. [4Fe-4S] cluster is required as a cofactor.

It is found in the cytoplasm. It catalyses the reaction N(6)-dimethylallyladenosine(37) in tRNA + (sulfur carrier)-SH + AH2 + 2 S-adenosyl-L-methionine = 2-methylsulfanyl-N(6)-dimethylallyladenosine(37) in tRNA + (sulfur carrier)-H + 5'-deoxyadenosine + L-methionine + A + S-adenosyl-L-homocysteine + 2 H(+). Its function is as follows. Catalyzes the methylthiolation of N6-(dimethylallyl)adenosine (i(6)A), leading to the formation of 2-methylthio-N6-(dimethylallyl)adenosine (ms(2)i(6)A) at position 37 in tRNAs that read codons beginning with uridine. This Erwinia tasmaniensis (strain DSM 17950 / CFBP 7177 / CIP 109463 / NCPPB 4357 / Et1/99) protein is tRNA-2-methylthio-N(6)-dimethylallyladenosine synthase.